The following is a 341-amino-acid chain: L-threonine 3-dehydrogenase (341 aa).

C38 is a binding site for Zn(2+). Active-site charge relay system residues include T40 and H43. Zn(2+)-binding residues include H63, E64, C93, C96, C99, and C107. Residues I175, D195, R200, L262–I264, and I286–Y287 each bind NAD(+).

Belongs to the zinc-containing alcohol dehydrogenase family. As to quaternary structure, homotetramer. It depends on Zn(2+) as a cofactor.

The protein resides in the cytoplasm. It catalyses the reaction L-threonine + NAD(+) = (2S)-2-amino-3-oxobutanoate + NADH + H(+). It participates in amino-acid degradation; L-threonine degradation via oxydo-reductase pathway; glycine from L-threonine: step 1/2. In terms of biological role, catalyzes the NAD(+)-dependent oxidation of L-threonine to 2-amino-3-ketobutyrate. The sequence is that of L-threonine 3-dehydrogenase from Salmonella gallinarum (strain 287/91 / NCTC 13346).